The chain runs to 264 residues: Thymidylate synthase (264 aa).

Residues Arg21 and 126–127 each bind dUMP; that span reads RR. The Nucleophile role is filled by Cys146. DUMP contacts are provided by residues 166 to 169, Asn177, and 207 to 209; these read RSAD and HLY. Asp169 provides a ligand contact to (6R)-5,10-methylene-5,6,7,8-tetrahydrofolate. A (6R)-5,10-methylene-5,6,7,8-tetrahydrofolate-binding site is contributed by Ala263.

This sequence belongs to the thymidylate synthase family. Bacterial-type ThyA subfamily. Homodimer.

It is found in the cytoplasm. It catalyses the reaction dUMP + (6R)-5,10-methylene-5,6,7,8-tetrahydrofolate = 7,8-dihydrofolate + dTMP. It functions in the pathway pyrimidine metabolism; dTTP biosynthesis. Functionally, catalyzes the reductive methylation of 2'-deoxyuridine-5'-monophosphate (dUMP) to 2'-deoxythymidine-5'-monophosphate (dTMP) while utilizing 5,10-methylenetetrahydrofolate (mTHF) as the methyl donor and reductant in the reaction, yielding dihydrofolate (DHF) as a by-product. This enzymatic reaction provides an intracellular de novo source of dTMP, an essential precursor for DNA biosynthesis. The polypeptide is Thymidylate synthase (Rhodopseudomonas palustris (strain BisB5)).